The chain runs to 270 residues: Tetraspanin-14 (270 aa).

Residues 1-17 (MHYYRYSNAEVSCWYKY) lie on the Cytoplasmic side of the membrane. Residues 18–38 (LLFSYNIVFWLAGVVFLGVGL) traverse the membrane as a helical segment. Over 39-61 (WAWSEKGVLSDLTKVTRLHGIDP) the chain is Extracellular. Residues 62-82 (VVLVLMVGVVMFTLGFAGCVG) traverse the membrane as a helical segment. Over 83 to 92 (ALRENICLLK) the chain is Cytoplasmic. A helical membrane pass occupies residues 93 to 113 (FFCGAIVLIFFLELAVAVLAF). At 114–232 (LFQDWVRDRF…QALEGWLPRN (119 aa)) the chain is on the extracellular side. A necessary and sufficient for interaction with ADAM10 region spans residues 114–232 (LFQDWVRDRF…QALEGWLPRN (119 aa)). Intrachain disulfides connect C153–C221, C154–C186, C170–C180, and C187–C200. N169 is a glycosylation site (N-linked (GlcNAc...) asparagine). The chain crosses the membrane as a helical span at residues 233–253 (IYIVAGVFIAISLLQIFGIFL). The Cytoplasmic portion of the chain corresponds to 254–270 (ARTLISDIEAVKAGHHF).

The protein belongs to the tetraspanin (TM4SF) family. Interacts with ADAM10; the interaction promotes ADAM10 maturation and cell surface expression.

The protein localises to the cell membrane. Part of TspanC8 subgroup, composed of 6 members that interact with the transmembrane metalloprotease ADAM10. This interaction is required for ADAM10 exit from the endoplasmic reticulum and for enzymatic maturation and trafficking to the cell surface as well as substrate specificity. Different TspanC8/ADAM10 complexes have distinct substrates. Negatively regulates ADAM10-mediated cleavage of GP6. Promotes ADAM10-mediated cleavage of CDH5. The sequence is that of Tetraspanin-14 (Tspan14) from Mus musculus (Mouse).